The following is a 1410-amino-acid chain: Endoribonuclease Dicer homolog 2a (1410 aa).

Residues 1-15 (MGGPLTAAGGRGDGG) are compositionally biased toward gly residues. A disordered region spans residues 1–30 (MGGPLTAAGGRGDGGAKAVEPLRPPPPPDP). The Helicase ATP-binding domain maps to 41-222 (ALERAVRGNT…HNYSKQISEI (182 aa)). 54–61 (LETGSGKT) provides a ligand contact to ATP. The DECH box motif lies at 163–166 (DECH). The Helicase C-terminal domain maps to 388–561 (TLLQYRHMQD…DTYYRVESTR (174 aa)). In terms of domain architecture, Dicer dsRNA-binding fold spans 569–655 (SVPLIHFFCS…LPELDVPCDE (87 aa)). The 116-residue stretch at 827 to 942 (KDIDLLQTKD…LPPELCRIIM (116 aa)) folds into the PAZ domain. RNase III domains follow at residues 969 to 1124 (SVKL…STAG) and 1161 to 1308 (VRSL…LDSK). Mg(2+)-binding residues include Glu-1200, Asp-1294, and Glu-1297. A DRBM domain is found at 1334 to 1400 (DPVKGLQEFC…SKAVLKDLIA (67 aa)).

Belongs to the helicase family. Dicer subfamily. May interact with ARGONAUTE1 or PINHEAD through their common PAZ domains. Mg(2+) serves as cofactor. It depends on Mn(2+) as a cofactor.

Its subcellular location is the nucleus. Probably involved in the RNA silencing pathway. May cleave double-stranded RNA to produce short 21-24 nucleotides (nt) RNAs which target the selective destruction of complementary RNAs. The chain is Endoribonuclease Dicer homolog 2a (DCL2A) from Oryza sativa subsp. japonica (Rice).